Consider the following 256-residue polypeptide: MAWSAGQYVKFEDERTRPARDLLAQVPLTRIDRAIDLGCGPGNSTELIVERYGVAGVSGLDSDDNMLEAARARMPGTDFVKADLATWLPDEPVDLLFANAVFQWLPNHLEIFDRLMDGLKSGGVLAIQMPDNLTEPSHLMMEETAKNGPWSDAFAKKSVRRNPLPAPSVYYNRLIGKSARIDLWHTNYNHALENAAAIVEWVKATGLRPYLDHAGAEHRDAFTADYLARIEKAYPPLTDGKVLLRFPRLFLVAVKK.

It belongs to the methyltransferase superfamily. Tam family.

Its subcellular location is the cytoplasm. The catalysed reaction is trans-aconitate + S-adenosyl-L-methionine = (E)-3-(methoxycarbonyl)pent-2-enedioate + S-adenosyl-L-homocysteine. Functionally, catalyzes the S-adenosylmethionine monomethyl esterification of trans-aconitate. The protein is Trans-aconitate 2-methyltransferase of Rhizobium rhizogenes (strain K84 / ATCC BAA-868) (Agrobacterium radiobacter).